The sequence spans 87 residues: U15-lycotoxin-Ls1h (87 aa).

The N-terminal stretch at 1 to 20 (MNSKIFAVLLLLGLLSCVLS) is a signal peptide. The WAP domain maps to 21–66 (DQYCPKSSITACKKMNTRNDCCKDDDCTGGSWCCATPCGNFCKYPT). 5 cysteine pairs are disulfide-bonded: C24-C54, C32-C58, C41-C53, C42-C80, and C47-C62.

This sequence belongs to the venom protein 11 family. 01 (wap-1) subfamily. In terms of processing, contains 5 disulfide bonds. Expressed by the venom gland.

It localises to the secreted. Its function is as follows. Has antibacterial activity. This Lycosa singoriensis (Wolf spider) protein is U15-lycotoxin-Ls1h.